The primary structure comprises 336 residues: Fructose-1,6-bisphosphatase class 1 (336 aa).

Glu90, Asp112, Leu114, and Asp115 together coordinate Mg(2+). Residues 115–118, Asn211, and Lys277 each bind substrate; that span reads DGSS. Position 283 (Glu283) interacts with Mg(2+).

Belongs to the FBPase class 1 family. As to quaternary structure, homotetramer. Mg(2+) is required as a cofactor.

The protein localises to the cytoplasm. It catalyses the reaction beta-D-fructose 1,6-bisphosphate + H2O = beta-D-fructose 6-phosphate + phosphate. It participates in carbohydrate biosynthesis; gluconeogenesis. The chain is Fructose-1,6-bisphosphatase class 1 from Pseudomonas fluorescens (strain ATCC BAA-477 / NRRL B-23932 / Pf-5).